The sequence spans 334 residues: Mitochondrial glycine transporter (334 aa).

Solcar repeat units lie at residues 10-94 (SKSS…IRQA), 127-211 (LSNT…FKRR), and 234-318 (RAAA…LIMR). The next 6 membrane-spanning stretches (helical) occupy residues 16–41 (FVAGLGSGVLSAALLQPIDLLKTRVQ), 69–95 (GTVPSALRTGFGSALYFSTLNAIRQAA), 133–158 (LLAGGVARGFAGFVLMPLTVIKVRYE), 186–209 (GFGATALRDAPYAGLYVLLYEQFK), 238–264 (VNFSSGVLAAVACSVVSNPFDAVKTRI), and 293–311 (GLGLRMSRKALSSALAWTL).

Belongs to the mitochondrial carrier (TC 2.A.29) family. SLC25A38 subfamily.

The protein resides in the mitochondrion inner membrane. It carries out the reaction glycine(in) = glycine(out). Functionally, mitochondrial glycine transporter that imports glycine into the mitochondrial matrix. Plays an important role in providing glycine for the first enzymatic step in heme biosynthesis, the condensation of glycine with succinyl-CoA to produce 5-aminolevulinate (ALA) in the mitochondrial matrix. The polypeptide is Mitochondrial glycine transporter (Pyricularia oryzae (strain 70-15 / ATCC MYA-4617 / FGSC 8958) (Rice blast fungus)).